Reading from the N-terminus, the 882-residue chain is DNA mismatch repair protein MutS (882 aa).

The segment at 1 to 22 (MTLPSDFPLEPPATNKDPHRDY) is disordered. 662-669 (GPNASGKS) lines the ATP pocket.

It belongs to the DNA mismatch repair MutS family.

Its function is as follows. This protein is involved in the repair of mismatches in DNA. It is possible that it carries out the mismatch recognition step. This protein has a weak ATPase activity. The protein is DNA mismatch repair protein MutS of Microcystis aeruginosa (strain NIES-843 / IAM M-2473).